The chain runs to 599 residues: MRTTYCGLVSEMLLGQTVTLMGWAHRRRDHGGVIFIDLRDREGLVQVVCDPDRAEMFKAAEGVRNEFCLKIVGKVRARPAGTENANLVSGKVELLCHELEVLNPSVTPPFQLDDDNLSETTRLTHRVLDLRRPAMQKNLILRYRVAMEVRKFLDANGFIDIETPMLTKSTPEGARDYLVPSRVNEGMFFALPQSPQLFKQLLMVSGFDRYYQITKCFRDEDLRADRQPEFTQIDIETSFLDEEEIRGMFEGMIRTVFRAVMNVELPGYPVMKYAEAMHRFGSDKPDLRVKMEFTELTEVMKDVDFKVFSAPAQAKGGRVVALRVPGGGEMSRSEIDGYTEFVKIYGAKGLAWIKVNDASKGREGLQSPIVKNLHDAAIAEIIARSGARNGDLLFFGADKAKVVNDAIGALRVKIGHSDFGKSGGLFEDKWAPLWVVDFPMFEHDEEGDRWAAVHNPFTAPKDGHEDLMDTDPGKCIAKAYDMVLNGWELGGGSVRIHRAEVQSKVFSALKIGPDEAQLKFGFLLDALQYGAPPHGGLAFGLDRLVTLMTKADSIRDVIAFPKTQRAQDLLTHAPSPVDEKQLRELHIRLRNPAAGQSGV.

L-aspartate is bound at residue glutamate 172. Residues 196 to 199 form an aspartate region; that stretch reads QLFK. Arginine 218 is a binding site for L-aspartate. ATP is bound by residues 218-220 and glutamine 227; that span reads RDE. Residue histidine 454 participates in L-aspartate binding. ATP is bound at residue glutamate 488. Arginine 495 serves as a coordination point for L-aspartate. 540–543 is an ATP binding site; it reads GLDR.

It belongs to the class-II aminoacyl-tRNA synthetase family. Type 1 subfamily. In terms of assembly, homodimer.

The protein localises to the cytoplasm. The catalysed reaction is tRNA(Asx) + L-aspartate + ATP = L-aspartyl-tRNA(Asx) + AMP + diphosphate. Its function is as follows. Aspartyl-tRNA synthetase with relaxed tRNA specificity since it is able to aspartylate not only its cognate tRNA(Asp) but also tRNA(Asn). Reaction proceeds in two steps: L-aspartate is first activated by ATP to form Asp-AMP and then transferred to the acceptor end of tRNA(Asp/Asn). The protein is Aspartate--tRNA(Asp/Asn) ligase of Methylibium petroleiphilum (strain ATCC BAA-1232 / LMG 22953 / PM1).